The primary structure comprises 353 residues: Photosystem II protein D1 (353 aa).

T2 carries the N-acetylthreonine modification. T2 carries the post-translational modification Phosphothreonine. 3 consecutive transmembrane segments (helical) span residues 29–46 (YIGW…TATS), 118–133 (HFLL…EWEL), and 142–156 (WIAV…AATA). Position 118 (H118) interacts with chlorophyll a. Position 126 (Y126) interacts with pheophytin a. [CaMn4O5] cluster-binding residues include D170 and E189. Residues 197-218 (FHMLGVAGVFGGSLFSAMHGSL) traverse the membrane as a helical segment. H198 serves as a coordination point for chlorophyll a. A quinone contacts are provided by residues H215 and 264–265 (SF). H215 lines the Fe cation pocket. Residue H272 coordinates Fe cation. The helical transmembrane segment at 274–288 (FLAAWPVVGIWFTAL) threads the bilayer. Residues H332, E333, D342, and A344 each coordinate [CaMn4O5] cluster. A propeptide spanning residues 345-353 (AVEVPSING) is cleaved from the precursor.

The protein belongs to the reaction center PufL/M/PsbA/D family. As to quaternary structure, PSII is composed of 1 copy each of membrane proteins PsbA, PsbB, PsbC, PsbD, PsbE, PsbF, PsbH, PsbI, PsbJ, PsbK, PsbL, PsbM, PsbT, PsbX, PsbY, PsbZ, Psb30/Ycf12, at least 3 peripheral proteins of the oxygen-evolving complex and a large number of cofactors. It forms dimeric complexes. It depends on The D1/D2 heterodimer binds P680, chlorophylls that are the primary electron donor of PSII, and subsequent electron acceptors. It shares a non-heme iron and each subunit binds pheophytin, quinone, additional chlorophylls, carotenoids and lipids. D1 provides most of the ligands for the Mn4-Ca-O5 cluster of the oxygen-evolving complex (OEC). There is also a Cl(-1) ion associated with D1 and D2, which is required for oxygen evolution. The PSII complex binds additional chlorophylls, carotenoids and specific lipids. as a cofactor. Post-translationally, tyr-161 forms a radical intermediate that is referred to as redox-active TyrZ, YZ or Y-Z. In terms of processing, C-terminally processed by CTPA; processing is essential to allow assembly of the oxygen-evolving complex and thus photosynthetic growth.

The protein localises to the plastid. The protein resides in the chloroplast thylakoid membrane. It catalyses the reaction 2 a plastoquinone + 4 hnu + 2 H2O = 2 a plastoquinol + O2. In terms of biological role, photosystem II (PSII) is a light-driven water:plastoquinone oxidoreductase that uses light energy to abstract electrons from H(2)O, generating O(2) and a proton gradient subsequently used for ATP formation. It consists of a core antenna complex that captures photons, and an electron transfer chain that converts photonic excitation into a charge separation. The D1/D2 (PsbA/PsbD) reaction center heterodimer binds P680, the primary electron donor of PSII as well as several subsequent electron acceptors. This is Photosystem II protein D1 from Triticum aestivum (Wheat).